Consider the following 230-residue polypeptide: Probable nicotinate-nucleotide adenylyltransferase (230 aa).

This sequence belongs to the NadD family.

It catalyses the reaction nicotinate beta-D-ribonucleotide + ATP + H(+) = deamido-NAD(+) + diphosphate. It functions in the pathway cofactor biosynthesis; NAD(+) biosynthesis; deamido-NAD(+) from nicotinate D-ribonucleotide: step 1/1. Functionally, catalyzes the reversible adenylation of nicotinate mononucleotide (NaMN) to nicotinic acid adenine dinucleotide (NaAD). This Pseudomonas putida (strain ATCC 47054 / DSM 6125 / CFBP 8728 / NCIMB 11950 / KT2440) protein is Probable nicotinate-nucleotide adenylyltransferase.